The chain runs to 190 residues: Ribonuclease HII (190 aa).

Residues 1–190 enclose the RNase H type-2 domain; that stretch reads MAGVDEVGRG…FCRKIIENPD (190 aa). A divalent metal cation is bound by residues aspartate 5, glutamate 6, and aspartate 101.

It belongs to the RNase HII family. Requires Mn(2+) as cofactor. Mg(2+) is required as a cofactor.

It localises to the cytoplasm. It carries out the reaction Endonucleolytic cleavage to 5'-phosphomonoester.. Endonuclease that specifically degrades the RNA of RNA-DNA hybrids. This is Ribonuclease HII (rnhB) from Synechocystis sp. (strain ATCC 27184 / PCC 6803 / Kazusa).